The following is a 122-amino-acid chain: S-adenosylmethionine decarboxylase proenzyme (122 aa).

Ser69 acts as the Schiff-base intermediate with substrate; via pyruvic acid in catalysis. Position 69 is a pyruvic acid (Ser); by autocatalysis (Ser69). The active-site Proton acceptor; for processing activity is His74. Residue Cys89 is the Proton donor; for catalytic activity of the active site.

This sequence belongs to the prokaryotic AdoMetDC family. Type 1 subfamily. Heterotetramer of two alpha and two beta chains arranged as a dimer of alpha/beta heterodimers. The cofactor is pyruvate. Is synthesized initially as an inactive proenzyme. Formation of the active enzyme involves a self-maturation process in which the active site pyruvoyl group is generated from an internal serine residue via an autocatalytic post-translational modification. Two non-identical subunits are generated from the proenzyme in this reaction, and the pyruvate is formed at the N-terminus of the alpha chain, which is derived from the carboxyl end of the proenzyme. The post-translation cleavage follows an unusual pathway, termed non-hydrolytic serinolysis, in which the side chain hydroxyl group of the serine supplies its oxygen atom to form the C-terminus of the beta chain, while the remainder of the serine residue undergoes an oxidative deamination to produce ammonia and the pyruvoyl group blocking the N-terminus of the alpha chain.

It catalyses the reaction S-adenosyl-L-methionine + H(+) = S-adenosyl 3-(methylsulfanyl)propylamine + CO2. It functions in the pathway amine and polyamine biosynthesis; S-adenosylmethioninamine biosynthesis; S-adenosylmethioninamine from S-adenosyl-L-methionine: step 1/1. Catalyzes the decarboxylation of S-adenosylmethionine to S-adenosylmethioninamine (dcAdoMet), the propylamine donor required for the synthesis of the polyamines spermine and spermidine from the diamine putrescine. The chain is S-adenosylmethionine decarboxylase proenzyme from Sulfurisphaera tokodaii (strain DSM 16993 / JCM 10545 / NBRC 100140 / 7) (Sulfolobus tokodaii).